The chain runs to 168 residues: Protein archease (168 aa).

Ala2 carries the post-translational modification N-acetylalanine. 3 residues coordinate Ca(2+): Asp39, Asp167, and Ile168.

It belongs to the archease family. Component of the tRNA-splicing ligase complex.

Its function is as follows. Component of the tRNA-splicing ligase complex required to facilitate the enzymatic turnover of catalytic subunit RTCB. Together with DDX1, acts by facilitating the guanylylation of RTCB, a key intermediate step in tRNA ligation. The chain is Protein archease (Zbtb8os) from Mus musculus (Mouse).